The sequence spans 243 residues: NAD-dependent protein deacetylase (243 aa).

One can recognise a Deacetylase sirtuin-type domain in the interval 1-243 (MRNDLETLKH…VSVVKSLMTE (243 aa)). Ala-24, Phe-35, Arg-36, Gln-105, Ile-107, Asp-108, and His-123 together coordinate NAD(+). Phe-35 is a nicotinamide binding site. Nicotinamide is bound by residues Ile-107 and Asp-108. Residue His-123 is the Proton acceptor of the active site. Residues Cys-131, Cys-134, Cys-151, and Cys-154 each coordinate Zn(2+). Residues Ser-192, Ser-193, Asn-215, and Asp-232 each coordinate NAD(+).

This sequence belongs to the sirtuin family. Class U subfamily. Zn(2+) serves as cofactor.

It localises to the cytoplasm. The enzyme catalyses N(6)-acetyl-L-lysyl-[protein] + NAD(+) + H2O = 2''-O-acetyl-ADP-D-ribose + nicotinamide + L-lysyl-[protein]. Its function is as follows. NAD-dependent protein deacetylase which modulates the activities of several enzymes which are inactive in their acetylated form. In Staphylococcus aureus (strain MSSA476), this protein is NAD-dependent protein deacetylase.